A 277-amino-acid chain; its full sequence is Shikimate dehydrogenase (NADP(+)) (277 aa).

Shikimate is bound by residues Ser-15–Ser-17 and Thr-62. Lys-66 (proton acceptor) is an active-site residue. Positions 87 and 102 each coordinate shikimate. NADP(+) contacts are provided by residues Gly-127–Ala-131, Asn-151–Lys-156, and Ile-219. Position 221 (Tyr-221) interacts with shikimate. Residue Gly-242 participates in NADP(+) binding.

This sequence belongs to the shikimate dehydrogenase family. Homodimer.

The catalysed reaction is shikimate + NADP(+) = 3-dehydroshikimate + NADPH + H(+). The protein operates within metabolic intermediate biosynthesis; chorismate biosynthesis; chorismate from D-erythrose 4-phosphate and phosphoenolpyruvate: step 4/7. Its function is as follows. Involved in the biosynthesis of the chorismate, which leads to the biosynthesis of aromatic amino acids. Catalyzes the reversible NADPH linked reduction of 3-dehydroshikimate (DHSA) to yield shikimate (SA). In Bacillus mycoides (strain KBAB4) (Bacillus weihenstephanensis), this protein is Shikimate dehydrogenase (NADP(+)).